The primary structure comprises 1023 residues: Transmembrane protein 132A (1023 aa).

A signal peptide spans Met1–Asp35. Residues Cys36–Ala852 lie on the Extracellular side of the membrane. Positions Ala212–Gln246 are disordered. A glycan (N-linked (GlcNAc...) asparagine) is linked at Asn280. 2 disordered regions span residues Trp512–Glu533 and Leu766–Ala839. Low complexity predominate over residues Pro515 to Glu527. Ser529 bears the Phosphoserine; by FAM20C mark. The binds to HSPA5/GRP78 stretch occupies residues Ile611–Pro916. Residues Leu671–Ser1023 form a confers cellular localization similar to full-length form region. Positions Ser778–Thr790 are enriched in low complexity. The span at Gly809–Thr823 shows a compositional bias: basic and acidic residues. Acidic residues predominate over residues Glu824–Met836. A helical membrane pass occupies residues Leu853 to Leu873. Residues Arg874–Ser1023 are Cytoplasmic-facing. The tract at residues Leu905–Lys961 is disordered.

It belongs to the TMEM132 family. As to quaternary structure, interacts with HSPA5/GRP78.

The protein localises to the golgi apparatus membrane. The protein resides in the endoplasmic reticulum membrane. Functionally, may play a role in embryonic and postnatal development of the brain. Increased resistance to cell death induced by serum starvation in cultured cells. Regulates cAMP-induced GFAP gene expression via STAT3 phosphorylation. The chain is Transmembrane protein 132A (TMEM132A) from Homo sapiens (Human).